Here is a 539-residue protein sequence, read N- to C-terminus: CTP synthase (539 aa).

An amidoligase domain region spans residues 1-267; sequence MTKYIFVTGG…DQKVCDFLHL (267 aa). Residue Ser-13 coordinates CTP. Ser-13 contacts UTP. 14 to 19 lines the ATP pocket; the sequence is SLGKGI. Residue Tyr-54 coordinates L-glutamine. An ATP-binding site is contributed by Asp-71. Residues Asp-71 and Glu-141 each coordinate Mg(2+). CTP is bound by residues 148–150, 188–193, and Lys-224; these read DIE and KTKPTQ. Residues 188–193 and Lys-224 each bind UTP; that span reads KTKPTQ. Residues 294–537 form the Glutamine amidotransferase type-1 domain; the sequence is KITLVGKYVE…IGAASGLPAQ (244 aa). Gly-356 contributes to the L-glutamine binding site. Cys-383 functions as the Nucleophile; for glutamine hydrolysis in the catalytic mechanism. L-glutamine is bound by residues 384-387, Glu-407, and Arg-465; that span reads LGMQ. Catalysis depends on residues His-510 and Glu-512.

Belongs to the CTP synthase family. In terms of assembly, homotetramer.

It catalyses the reaction UTP + L-glutamine + ATP + H2O = CTP + L-glutamate + ADP + phosphate + 2 H(+). The enzyme catalyses L-glutamine + H2O = L-glutamate + NH4(+). The catalysed reaction is UTP + NH4(+) + ATP = CTP + ADP + phosphate + 2 H(+). The protein operates within pyrimidine metabolism; CTP biosynthesis via de novo pathway; CTP from UDP: step 2/2. Its activity is regulated as follows. Allosterically activated by GTP, when glutamine is the substrate; GTP has no effect on the reaction when ammonia is the substrate. The allosteric effector GTP functions by stabilizing the protein conformation that binds the tetrahedral intermediate(s) formed during glutamine hydrolysis. Inhibited by the product CTP, via allosteric rather than competitive inhibition. Catalyzes the ATP-dependent amination of UTP to CTP with either L-glutamine or ammonia as the source of nitrogen. Regulates intracellular CTP levels through interactions with the four ribonucleotide triphosphates. This is CTP synthase from Lactobacillus acidophilus (strain ATCC 700396 / NCK56 / N2 / NCFM).